The sequence spans 452 residues: Interferon-induced protein 44-like (452 aa).

Positions 1–159 (MEVTTRLTWN…YLECEVFRVE (159 aa)) constitute a TLDc domain.

Belongs to the IFI44 family. In terms of assembly, interacts with FKBP5; this interaction modulates IKBKB and IKBKE kinase activities.

It localises to the cytoplasm. In terms of biological role, type I interferon-stimulated gene (ISG) that plays a critical role in antiviral and antibacterial activity. During bacterial infection, promotes macrophage differentiation and facilitates inflammatory cytokine secretion. Plays a role in the control of respiratory syncytial virus/RSV infection, reducing the ability of the virus to replicate. Exhibits a low antiviral activity against hepatitis C virus. Also acts as a feedback regulator of IFN responses by negatively regulating IKBKB and IKBKE kinase activities through interaction with FKBP5. The chain is Interferon-induced protein 44-like (IFI44L) from Homo sapiens (Human).